Reading from the N-terminus, the 65-residue chain is Large ribosomal subunit protein bL35 (65 aa).

The interval 1-22 is disordered; that stretch reads MPKMKTKSSAKKRFKVTGSGKI.

It belongs to the bacterial ribosomal protein bL35 family.

This chain is Large ribosomal subunit protein bL35, found in Flavobacterium johnsoniae (strain ATCC 17061 / DSM 2064 / JCM 8514 / BCRC 14874 / CCUG 350202 / NBRC 14942 / NCIMB 11054 / UW101) (Cytophaga johnsonae).